Reading from the N-terminus, the 389-residue chain is Chalcone synthase 1 (389 aa).

The active site involves Cys164.

The protein belongs to the thiolase-like superfamily. Chalcone/stilbene synthases family.

The catalysed reaction is (E)-4-coumaroyl-CoA + 3 malonyl-CoA + 3 H(+) = 2',4,4',6'-tetrahydroxychalcone + 3 CO2 + 4 CoA. Its pathway is secondary metabolite biosynthesis; flavonoid biosynthesis. Functionally, the primary product of this enzyme is 4,2',4',6'-tetrahydroxychalcone (also termed naringenin-chalcone or chalcone) which can under specific conditions spontaneously isomerize into naringenin. This Medicago sativa (Alfalfa) protein is Chalcone synthase 1 (CHS1).